A 472-amino-acid polypeptide reads, in one-letter code: MAGQTLYDKLWNAHEVTKRDDGSSLIYIDRHLLHEVTSPQAFEGLELANRAPWRLSANIASPDHNVPTVTKERSEGVAGIKDKVSRLQVLTLDNNCAKFDIAEFTINDARQGILHVVGPEQGLVLPGMTVVCGDSHTATHGALGCLAHGIGTSEVEHVLATQCLIQKKSKNMQIRVTGELGVGVTSKDVVLAIIAKIGTAGGTGHAIEFAGQVFEDMSMEGRMTVCNMAIEAGARVGMVAVDDTTINYVKGRPYAPNESQWQQAEAYWRTFYSDDDAVFDSVVEIDGSQIAPQVSWGTSPEMVVDVTQSVPTLDQAIDEAQEEGWLRAYTYMGLEAGQKITDIQLDRIFIGSCTNSRIEDLRDAAAVIKGRKVADNIKEAIVVAGSGQVKLQAEAEGLDALFTDAGFEWREPGCSMCLAMNADKLEPQEHCASTSNRNFEGRQGNGGRTHLVSPAMAAAAALAGHFVDVRTF.

Positions 353, 414, and 417 each coordinate [4Fe-4S] cluster.

Belongs to the aconitase/IPM isomerase family. LeuC type 1 subfamily. As to quaternary structure, heterodimer of LeuC and LeuD. It depends on [4Fe-4S] cluster as a cofactor.

It catalyses the reaction (2R,3S)-3-isopropylmalate = (2S)-2-isopropylmalate. The protein operates within amino-acid biosynthesis; L-leucine biosynthesis; L-leucine from 3-methyl-2-oxobutanoate: step 2/4. Functionally, catalyzes the isomerization between 2-isopropylmalate and 3-isopropylmalate, via the formation of 2-isopropylmaleate. The sequence is that of 3-isopropylmalate dehydratase large subunit from Psychrobacter arcticus (strain DSM 17307 / VKM B-2377 / 273-4).